A 179-amino-acid polypeptide reads, in one-letter code: Large ribosomal subunit protein uL6 (179 aa).

Belongs to the universal ribosomal protein uL6 family. In terms of assembly, part of the 50S ribosomal subunit.

In terms of biological role, this protein binds to the 23S rRNA, and is important in its secondary structure. It is located near the subunit interface in the base of the L7/L12 stalk, and near the tRNA binding site of the peptidyltransferase center. The chain is Large ribosomal subunit protein uL6 from Legionella pneumophila (strain Paris).